Consider the following 207-residue polypeptide: Transcriptional regulatory protein RcsA (207 aa).

One can recognise an HTH luxR-type domain in the interval 131-196 (LNMPTLSLSR…VIYHVVRLTD (66 aa)). The H-T-H motif DNA-binding region spans 155–174 (TIQISDQMNIKAKTVSSHKG).

The protein belongs to the RcsA family. As to quaternary structure, interacts with RcsB.

Its function is as follows. Component of the Rcs signaling system, which controls transcription of numerous genes. Binds, with RcsB, to the RcsAB box to regulate expression of genes. The chain is Transcriptional regulatory protein RcsA from Escherichia coli O157:H7.